The chain runs to 379 residues: Cobalt-precorrin-5B C(1)-methyltransferase (379 aa).

Belongs to the CbiD family.

It carries out the reaction Co-precorrin-5B + S-adenosyl-L-methionine = Co-precorrin-6A + S-adenosyl-L-homocysteine. It functions in the pathway cofactor biosynthesis; adenosylcobalamin biosynthesis; cob(II)yrinate a,c-diamide from sirohydrochlorin (anaerobic route): step 6/10. In terms of biological role, catalyzes the methylation of C-1 in cobalt-precorrin-5B to form cobalt-precorrin-6A. This is Cobalt-precorrin-5B C(1)-methyltransferase from Salmonella arizonae (strain ATCC BAA-731 / CDC346-86 / RSK2980).